The sequence spans 229 residues: Heptaprenylglyceryl phosphate synthase (229 aa).

Lys12 lines the sn-glycerol 1-phosphate pocket. The Mg(2+) site is built by Asp14 and Thr40. Sn-glycerol 1-phosphate contacts are provided by residues 159–164 (YIEYSG), Gly189, and 209–210 (GN).

The protein belongs to the GGGP/HepGP synthase family. Group I subfamily. In terms of assembly, homodimer. It depends on Mg(2+) as a cofactor.

It catalyses the reaction sn-glycerol 1-phosphate + all-trans-heptaprenyl diphosphate = 3-heptaprenyl-sn-glycero-1-phosphate + diphosphate. The protein operates within membrane lipid metabolism; glycerophospholipid metabolism. Its function is as follows. Prenyltransferase that catalyzes in vivo the transfer of the heptaprenyl moiety of heptaprenyl pyrophosphate (HepPP; 35 carbon atoms) to the C3 hydroxyl of sn-glycerol-1-phosphate (G1P), producing heptaprenylglyceryl phosphate (HepGP). This reaction is an ether-bond-formation step in the biosynthesis of archaea-type G1P-based membrane lipids found in Bacillales. This Staphylococcus carnosus (strain TM300) protein is Heptaprenylglyceryl phosphate synthase.